Here is a 236-residue protein sequence, read N- to C-terminus: tRNA (guanine-N(7)-)-methyltransferase (236 aa).

Residues aspartate 35, glutamate 60, asparagine 87, and aspartate 113 each coordinate S-adenosyl-L-methionine. Aspartate 113 is an active-site residue. 2 residues coordinate substrate: lysine 117 and aspartate 149.

The protein belongs to the class I-like SAM-binding methyltransferase superfamily. TrmB family.

The catalysed reaction is guanosine(46) in tRNA + S-adenosyl-L-methionine = N(7)-methylguanosine(46) in tRNA + S-adenosyl-L-homocysteine. Its pathway is tRNA modification; N(7)-methylguanine-tRNA biosynthesis. Catalyzes the formation of N(7)-methylguanine at position 46 (m7G46) in tRNA. The sequence is that of tRNA (guanine-N(7)-)-methyltransferase from Prochlorococcus marinus (strain MIT 9303).